Consider the following 241-residue polypeptide: DNA repair protein RecO (241 aa).

This sequence belongs to the RecO family.

In terms of biological role, involved in DNA repair and RecF pathway recombination. This is DNA repair protein RecO from Yersinia pseudotuberculosis serotype O:1b (strain IP 31758).